A 528-amino-acid chain; its full sequence is DEAD-box ATP-dependent RNA helicase 6 (528 aa).

Low complexity-rich tracts occupy residues 1-15 (MNNN…PPGI) and 65-80 (QQYV…QQQQ). Positions 1-80 (MNNNNNNRGR…GYPQQIQQQQ (80 aa)) are disordered. Positions 154-182 (NEFEDYFLKRDLLRGIYEKGFEKPSPIQE) match the Q motif motif. In terms of domain architecture, Helicase ATP-binding spans 185-355 (IPIALTGSDI…DRYLKKPYII (171 aa)). 198-205 (AKNGTGKT) provides a ligand contact to ATP. Thr-260 is modified (phosphothreonine). The DEAD box motif lies at 303–306 (DEAD). The region spanning 365 to 525 (GVTQYYAFVE…PIPSLIDKAI (161 aa)) is the Helicase C-terminal domain.

This sequence belongs to the DEAD box helicase family. DDX6/DHH1 subfamily.

Its subcellular location is the cytoplasm. The protein resides in the P-body. The catalysed reaction is ATP + H2O = ADP + phosphate + H(+). Its function is as follows. ATP-dependent RNA helicase involved in mRNA turnover, and more specifically in mRNA decapping. This is DEAD-box ATP-dependent RNA helicase 6 (RH6) from Arabidopsis thaliana (Mouse-ear cress).